Reading from the N-terminus, the 461-residue chain is MINDVINTIEKNSMIKQNDRIVVAVSGGPDSICLLHILFKLKDKFNTSICAAHVNHCIRGEAADKDEEYVKKFCEKLDIQFYVKRVDVNKIAHEKKISSEMAGREIRYAFFEEVKERFKANKIAIAHNANDQAETIMMRIIRGTGTEGIKGIRPVRDGYYIRPLIEIRRSSIEKYCEDEKLMPRIDATNLERDYNRNKIRLDLIPYIVKNFNEDIVGALNRLGELVTIDNDYLEKLAKSKYKLYCNECEKQVIISKEAFSNDTAILSRIIRRAVFYLVNSKYNLEKKHIDSIIGCQKNTTGKQINLPNNMRAYNNYGDICLRIKEDESCIGKKEYNLHMDKLNSVHEENLIIGIRLIHNSKDIRLEGNKNVKYFDADKAGKYITLRYRSEGDKFMPFGMKNNKKLKDIFINLKIPREERNKIPLICFGGEIAWITGFKISEKFKIDNNTKKILEIKIEREE.

26-31 (SGGPDS) serves as a coordination point for ATP.

This sequence belongs to the tRNA(Ile)-lysidine synthase family.

The protein resides in the cytoplasm. The enzyme catalyses cytidine(34) in tRNA(Ile2) + L-lysine + ATP = lysidine(34) in tRNA(Ile2) + AMP + diphosphate + H(+). Ligates lysine onto the cytidine present at position 34 of the AUA codon-specific tRNA(Ile) that contains the anticodon CAU, in an ATP-dependent manner. Cytidine is converted to lysidine, thus changing the amino acid specificity of the tRNA from methionine to isoleucine. This chain is tRNA(Ile)-lysidine synthase, found in Clostridium acetobutylicum (strain ATCC 824 / DSM 792 / JCM 1419 / IAM 19013 / LMG 5710 / NBRC 13948 / NRRL B-527 / VKM B-1787 / 2291 / W).